The sequence spans 819 residues: Meiotically up-regulated gene 45 protein (819 aa).

Residues 797–817 (AMCLLTLLIGIYLILQVVFIY) form a helical membrane-spanning segment.

It localises to the membrane. Has a role in meiosis. This Schizosaccharomyces pombe (strain 972 / ATCC 24843) (Fission yeast) protein is Meiotically up-regulated gene 45 protein (mug45).